Consider the following 98-residue polypeptide: Citrate lyase acyl carrier protein (98 aa).

Serine 14 is modified (O-(phosphoribosyl dephospho-coenzyme A)serine).

It belongs to the CitD family. Oligomer with a subunit composition of (alpha,beta,gamma)6.

It is found in the cytoplasm. In terms of biological role, covalent carrier of the coenzyme of citrate lyase. This chain is Citrate lyase acyl carrier protein, found in Salmonella arizonae (strain ATCC BAA-731 / CDC346-86 / RSK2980).